The chain runs to 394 residues: 1-deoxy-D-xylulose 5-phosphate reductoisomerase (394 aa).

Residues Thr6, Gly7, Ser8, Ile9, Ala32, and Asn124 each contribute to the NADPH site. Lys125 serves as a coordination point for 1-deoxy-D-xylulose 5-phosphate. Glu126 lines the NADPH pocket. Asp148 contacts Mn(2+). 1-deoxy-D-xylulose 5-phosphate is bound by residues Ser149, Glu150, Ser174, and His197. Position 150 (Glu150) interacts with Mn(2+). Residue Gly203 coordinates NADPH. Residues Ser210, Asn215, Lys216, and Glu219 each coordinate 1-deoxy-D-xylulose 5-phosphate. Glu219 contributes to the Mn(2+) binding site.

Belongs to the DXR family. Requires Mg(2+) as cofactor. Mn(2+) serves as cofactor.

The enzyme catalyses 2-C-methyl-D-erythritol 4-phosphate + NADP(+) = 1-deoxy-D-xylulose 5-phosphate + NADPH + H(+). It participates in isoprenoid biosynthesis; isopentenyl diphosphate biosynthesis via DXP pathway; isopentenyl diphosphate from 1-deoxy-D-xylulose 5-phosphate: step 1/6. Catalyzes the NADPH-dependent rearrangement and reduction of 1-deoxy-D-xylulose-5-phosphate (DXP) to 2-C-methyl-D-erythritol 4-phosphate (MEP). The chain is 1-deoxy-D-xylulose 5-phosphate reductoisomerase from Streptomyces avermitilis (strain ATCC 31267 / DSM 46492 / JCM 5070 / NBRC 14893 / NCIMB 12804 / NRRL 8165 / MA-4680).